The primary structure comprises 373 residues: Lipoyl amidotransferase LIPT1, mitochondrial (373 aa).

Residues M1 to K25 constitute a mitochondrion transit peptide. Residues L57–N243 enclose the BPL/LPL catalytic domain. (R)-lipoyl-5'-AMP contacts are provided by Y107, R151, K161, T179, T208, and A210.

Belongs to the LplA family.

Its subcellular location is the mitochondrion. It catalyses the reaction N(6)-[(R)-lipoyl]-L-lysyl-[glycine-cleavage complex H protein] + L-lysyl-[lipoyl-carrier protein] = L-lysyl-[glycine-cleavage complex H protein] + N(6)-[(R)-lipoyl]-L-lysyl-[lipoyl-carrier protein]. The catalysed reaction is (R)-lipoyl-5'-AMP + L-lysyl-[lipoyl-carrier protein] = N(6)-[(R)-lipoyl]-L-lysyl-[lipoyl-carrier protein] + AMP + 2 H(+). The protein operates within protein modification; protein lipoylation via exogenous pathway; protein N(6)-(lipoyl)lysine from lipoate: step 2/2. With respect to regulation, inhibited by lipoyl-AMP analogs including hexanoyl-, octanoyl- and decanoyl-AMP. In terms of biological role, lipoyl amidotransferase that catalyzes the transfer of lipoyl moieties from lipoyl-protein H of the glycine cleavage system (lipoyl-GCSH) to E2 subunits of the pyruvate dehydrogenase complex (PDCE2). Unable to catalyze the transfer of octanoyl from octanoyl-GCSH to PDCE2. In vitro, it is also able to catalyze the transfer of the lipoyl group from lipoyl-AMP to the specific lysine residue of lipoyl domains of lipoate-dependent enzymes but this reaction may not be physiologically relevant. The chain is Lipoyl amidotransferase LIPT1, mitochondrial (LIPT1) from Bos taurus (Bovine).